The following is a 299-amino-acid chain: pH-regulated antigen PRA1 (299 aa).

An N-terminal signal peptide occupies residues 1–15; it reads MNYLLFCLFFAFSVA. N48, N89, N135, and N208 each carry an N-linked (GlcNAc...) asparagine glycan. The interval 253–299 is disordered; the sequence is FEDSDSGSDSGASSTASSSHQHTDSNPSATTDANSHCHTHADGEVHC. Residues 259-272 are compositionally biased toward low complexity; the sequence is GSDSGASSTASSSH. Residues 278–288 show a composition bias toward polar residues; that stretch reads NPSATTDANSH.

The protein belongs to the ZPS1 family. In terms of assembly, component of a multiprotein complex of 250 kDa composed of at least HYR1, MP65, and PRA1. Interacts with host Integrin alpha-M/beta-2 heterodimer. Also binds human factor H (CFH), CFHR1, plasminogen (PLG), complement C3, and C4BPA. Interacts with ZRT101. Post-translationally, N- and O-glycosylated. The N- and 0-glycosidically linked carbohydrates represent 18 to 20 percent and 3 to 4 percent, respectively, of the molecular mass of PRA1. 0-linked sugar residues may be involved in the interaction with fibrinogen. Contributes highly to the carbohydrate component of the matrix. Treatment with tunicamycin impairs glycosylation.

Its subcellular location is the secreted. In terms of biological role, cell surface protein involved in the host-parasite interaction during candidal infection. With MP65, represents a major component of the biofilm matrix. As a surface protein, binds the two human complement regulators CFH and CFHR1, as well as plasminogen PLG, mediates complement evasion and extra-cellular matrix interaction and/or degradation. As a released protein, enhances complement control in direct vicinity of the yeast and thus generates an additional protective layer which controls host complement attack, assisting the fungus in escaping host surveillance. Binds to host fluid-phase C3 and blocks cleavage of C3 to C3a and C3b, leading to inhibition of complement activation and protection from uptake of C.albicans by human macrophages. Also mediates human complement control and complement evasion through binding to C4BPA, another human complement inhibitor, as well as through binding to host integrin alpha-M/beta-2. Binds zinc from its environment and then reassociates with ZRT1 to acquire this essential metal. The polypeptide is pH-regulated antigen PRA1 (Candida albicans (strain SC5314 / ATCC MYA-2876) (Yeast)).